Consider the following 710-residue polypeptide: Homeobox-leucine zipper protein ROC8 (710 aa).

A disordered region spans residues methionine 1–threonine 23. The span at arginine 14 to threonine 23 shows a compositional bias: basic residues. A DNA-binding region (homeobox) is located at residues arginine 15–histidine 74. Residues leucine 82–tyrosine 144 adopt a coiled-coil conformation. The START domain occupies serine 197 to serine 440. The span at arginine 630–alanine 648 shows a compositional bias: low complexity. A disordered region spans residues arginine 630–glycine 650.

The protein belongs to the HD-ZIP homeobox family. Class IV subfamily.

Its subcellular location is the nucleus. Probable transcription factor. In Oryza sativa subsp. japonica (Rice), this protein is Homeobox-leucine zipper protein ROC8 (ROC8).